Reading from the N-terminus, the 466-residue chain is Methylenomycin A resistance protein (466 aa).

A run of 14 helical transmembrane segments spans residues 16–36, 56–76, 83–103, 113–133, 146–166, 168–188, 203–223, 234–254, 276–296, 305–325, 337–357, 367–387, 409–429, and 434–454; these read ISVL…VTVV, WVVD…GALA, TIYI…AASI, LIQG…LAAS, LWAA…GVLV, LAGW…ALIS, VNII…YALI, VILV…LREI, FIGF…SLFL, FMAG…NLLF, LMFV…VLIS, VLMS…TTVI, IGAL…ATWY, and FAFL…WLFL.

This sequence belongs to the major facilitator superfamily. EmrB family.

It is found in the cell membrane. In terms of biological role, resistance to the epoxide antibiotic methylenomycin. This chain is Methylenomycin A resistance protein (mmr), found in Bacillus subtilis (strain 168).